Reading from the N-terminus, the 2072-residue chain is Protein still life, isoform SIF type 1 (2072 aa).

Glycine 2 carries N-myristoyl glycine lipidation. Positions 29-147 constitute a WH1 domain; that stretch reads RRDGHLLSSF…ECCSPSFKFS (119 aa). 7 disordered regions span residues 153–188, 245–284, 327–355, 459–486, 502–576, 618–655, and 699–747; these read SYSL…EPQC, DNVA…NTNT, EGTQ…RNKD, NNTM…RGYP, EGSP…SPTS, AKSS…ELIR, and SGSS…YKSA. Over residues 275-284 the composition is skewed to polar residues; it reads VANSGVNTNT. Composition is skewed to low complexity over residues 338–351, 459–476, and 522–553; these read SVGT…GTGT, NNTM…SGSR, and SSSN…PPQR. Residues 564 to 576 are compositionally biased toward polar residues; it reads APNVTPTPGSPTS. Residues 634–655 are compositionally biased toward basic and acidic residues; that stretch reads IRDKERDRDRDGYYSDRNELIR. A compositionally biased stretch (polar residues) spans 732–743; that stretch reads SLRQDSSLNDSG. The PH domain occupies 840-958; that stretch reads TGAVRKAGFL…SIHSACAAAF (119 aa). The segment at 1088 to 1119 is disordered; that stretch reads GRGATKRRPPMLSRSNSGSSRRSMQMNSRDEP. The segment covering 1100–1114 has biased composition (low complexity); the sequence is SRSNSGSSRRSMQMN. The region spanning 1121–1188 is the RBD domain; it reads KTFKVAMPDN…PHRNDLIENY (68 aa). The 90-residue stretch at 1204–1293 folds into the PDZ domain; that stretch reads QVELQRTTLE…LSMMMRSSRT (90 aa). The segment at 1403–1424 is disordered; the sequence is AEQETRKSSPTGSVTSSVSTTA. The span at 1410-1424 shows a compositional bias: low complexity; the sequence is SSPTGSVTSSVSTTA. Residues 1436-1630 form the DH domain; it reads KLRKVVMELV…EKVAEHINEM (195 aa). Disordered stretches follow at residues 1803–1832, 1844–2039, and 2051–2072; these read MKNF…NSQT, HGSH…YQPV, and PRDM…DVKN. Composition is skewed to low complexity over residues 1811 to 1821 and 1926 to 1943; these read GSVSGHSSQGM and QQQQ…QQGH. The segment covering 1970-1984 has biased composition (basic and acidic residues); that stretch reads HSSDIERIDPGTKSE. The segment covering 2007–2022 has biased composition (low complexity); that stretch reads LTLSTTSTLSVGSTGS. The segment covering 2023 to 2032 has biased composition (polar residues); sequence QARLIQSSHP.

In terms of tissue distribution, expressed in both larval and adult brains, mainly in a subset of neurons but not in glia. In the adult eye is expressed in the two primary pigment cells in the subapical region of the eye. Also present in photoreceptors.

Its subcellular location is the synapse. Functionally, regulates synaptic differentiation through the organization of actin cytoskeleton possibly by activating Rho-like GTPases. Is likely a factor in the cascade of Rac1 or Cdc42 in the neurons. May play a role in maintaining proper septate junction functions. Required for eye development and most likely affects corneal lens-formation. The sequence is that of Protein still life, isoform SIF type 1 (sif) from Drosophila melanogaster (Fruit fly).